Reading from the N-terminus, the 48-residue chain is Sperm protamine P1 (48 aa).

The protein belongs to the protamine P1 family. In terms of tissue distribution, testis.

The protein resides in the nucleus. The protein localises to the chromosome. In terms of biological role, protamines substitute for histones in the chromatin of sperm during the haploid phase of spermatogenesis. They compact sperm DNA into a highly condensed, stable and inactive complex. This Murina cyclotis (Round-eared tube-nosed bat) protein is Sperm protamine P1 (PRM1).